Here is a 280-residue protein sequence, read N- to C-terminus: Vitamin B12-binding protein (280 aa).

Residues 1 to 27 form the signal peptide; that stretch reads MMPLGLFPLPRAAVVLLISLLTLPAQA. The Fe/B12 periplasmic-binding domain maps to 30–277; sequence RVISLSPSTT…QMASIPTPVA (248 aa). Cyanocob(III)alamin is bound at residue Tyr57. A disulfide bridge links Cys190 with Cys266.

This sequence belongs to the BtuF family. In terms of assembly, the complex is composed of two ATP-binding proteins (BtuD), two transmembrane proteins (BtuC) and a solute-binding protein (BtuF).

It is found in the periplasm. Functionally, part of the ABC transporter complex BtuCDF involved in vitamin B12 import. Binds vitamin B12 and delivers it to the periplasmic surface of BtuC. In Yersinia pseudotuberculosis serotype O:1b (strain IP 31758), this protein is Vitamin B12-binding protein.